Here is a 508-residue protein sequence, read N- to C-terminus: Cytochrome c-552 (508 aa).

Residues 1–23 form the signal peptide; the sequence is MNKSYKILLTGSVIAIGAMGLMA. Residue His-103 participates in heme c binding. Heme contacts are provided by Cys-131, Cys-134, and Lys-135. Residues Cys-169, Cys-172, His-173, Cys-211, Cys-214, and His-215 each coordinate heme c. Residues Glu-217, Tyr-218, Lys-274, and Gln-276 each contribute to the Ca(2+) site. Tyr-218 provides a ligand contact to substrate. His-277 is a substrate binding site. 9 residues coordinate heme c: His-288, Cys-295, Cys-298, His-299, His-313, Cys-326, Cys-329, His-330, and His-405. The disordered stretch occupies residues 485–508; the sequence is GRLDPKTLEGMSNKSSWSQTELSQ. Positions 494–508 are enriched in polar residues; the sequence is GMSNKSSWSQTELSQ.

It belongs to the cytochrome c-552 family. Ca(2+) serves as cofactor. It depends on heme c as a cofactor.

Its subcellular location is the periplasm. It catalyses the reaction 6 Fe(III)-[cytochrome c] + NH4(+) + 2 H2O = 6 Fe(II)-[cytochrome c] + nitrite + 8 H(+). It participates in nitrogen metabolism; nitrate reduction (assimilation). In terms of biological role, catalyzes the reduction of nitrite to ammonia, consuming six electrons in the process. The chain is Cytochrome c-552 from Desulfotalea psychrophila (strain LSv54 / DSM 12343).